We begin with the raw amino-acid sequence, 77 residues long: Acyl carrier protein (77 aa).

The Carrier domain occupies serine 2 to glutamine 77. At serine 37 the chain carries O-(pantetheine 4'-phosphoryl)serine.

This sequence belongs to the acyl carrier protein (ACP) family. 4'-phosphopantetheine is transferred from CoA to a specific serine of apo-ACP by AcpS. This modification is essential for activity because fatty acids are bound in thioester linkage to the sulfhydryl of the prosthetic group.

Its subcellular location is the cytoplasm. It participates in lipid metabolism; fatty acid biosynthesis. Carrier of the growing fatty acid chain in fatty acid biosynthesis. The chain is Acyl carrier protein from Chromohalobacter salexigens (strain ATCC BAA-138 / DSM 3043 / CIP 106854 / NCIMB 13768 / 1H11).